A 410-amino-acid polypeptide reads, in one-letter code: Argininosuccinate synthase (410 aa).

Residues 10–18 (AYSGGLDTS) and A37 contribute to the ATP site. Positions 90 and 95 each coordinate L-citrulline. G120 is a binding site for ATP. Positions 122, 126, and 127 each coordinate L-aspartate. An L-citrulline-binding site is contributed by N126. L-citrulline contacts are provided by R130, S182, S191, E267, and Y279.

It belongs to the argininosuccinate synthase family. Type 1 subfamily. Homotetramer.

It is found in the cytoplasm. It carries out the reaction L-citrulline + L-aspartate + ATP = 2-(N(omega)-L-arginino)succinate + AMP + diphosphate + H(+). It participates in amino-acid biosynthesis; L-arginine biosynthesis; L-arginine from L-ornithine and carbamoyl phosphate: step 2/3. The sequence is that of Argininosuccinate synthase from Polynucleobacter asymbioticus (strain DSM 18221 / CIP 109841 / QLW-P1DMWA-1) (Polynucleobacter necessarius subsp. asymbioticus).